Reading from the N-terminus, the 1477-residue chain is Putative insulin-like peptide receptor (1477 aa).

A signal peptide spans 1–24 (MMRNVQSFYFLFLLIVLNFHVVLS). The Extracellular portion of the chain corresponds to 25 to 980 (AVCIGQRATT…LSVTKNNNQL (956 aa)). N-linked (GlcNAc...) asparagine glycosylation is found at Asn-55, Asn-255, Asn-300, Asn-325, Asn-457, Asn-491, Asn-549, Asn-644, Asn-732, Asn-791, Asn-874, Asn-895, and Asn-957. 2 Fibronectin type-III domains span residues 652-750 (EPLG…IKAD) and 780-869 (NKSP…IVQA). One can recognise a Fibronectin type-III 3 domain in the interval 880-971 (LDSKMVRVQV…EEIHFKVAEL (92 aa)). Residues 981–1001 (IIGIISAVSAVIVALLVFILL) traverse the membrane as a helical segment. At 1002 to 1477 (YMFLHRKLEK…EIFYGKPIPV (476 aa)) the chain is on the cytoplasmic side. The Protein kinase domain maps to 1044-1315 (IELIRELGQG…LENEVDDDFV (272 aa)). Residues 1050 to 1058 (LGQGSFGMV) and Lys-1077 each bind ATP. Asp-1175 acts as the Proton acceptor in catalysis. Tyr-1201 carries the post-translational modification Phosphotyrosine; by autocatalysis. Disordered regions lie at residues 1350-1376 (YTKG…KSKE) and 1391-1421 (KYDA…SNAC). Residues 1356 to 1368 (NMQNMLSRSQNRK) are compositionally biased toward polar residues. Residues 1403–1412 (KKKKRPRSKR) are compositionally biased toward basic residues.

The protein belongs to the protein kinase superfamily. Tyr protein kinase family. Insulin receptor subfamily. It depends on Mn(2+) as a cofactor. Expressed in dividing epithelial cells.

The protein localises to the membrane. It catalyses the reaction L-tyrosyl-[protein] + ATP = O-phospho-L-tyrosyl-[protein] + ADP + H(+). Functionally, this receptor probably binds an insulin related protein and has a tyrosine-protein kinase activity. This chain is Putative insulin-like peptide receptor (HTK7), found in Hydra vulgaris (Hydra).